We begin with the raw amino-acid sequence, 358 residues long: Uroporphyrinogen decarboxylase (358 aa).

Residues 29-33 (RQAGR), aspartate 79, tyrosine 155, serine 210, and histidine 330 contribute to the substrate site.

This sequence belongs to the uroporphyrinogen decarboxylase family. As to quaternary structure, homodimer.

It localises to the cytoplasm. The catalysed reaction is uroporphyrinogen III + 4 H(+) = coproporphyrinogen III + 4 CO2. Its pathway is porphyrin-containing compound metabolism; protoporphyrin-IX biosynthesis; coproporphyrinogen-III from 5-aminolevulinate: step 4/4. Its function is as follows. Catalyzes the decarboxylation of four acetate groups of uroporphyrinogen-III to yield coproporphyrinogen-III. This is Uroporphyrinogen decarboxylase from Bordetella petrii (strain ATCC BAA-461 / DSM 12804 / CCUG 43448).